The chain runs to 177 residues: FMRFamide-related peptides (177 aa).

Residues 1–21 (MNHPRSIAMLAALWLVVSVTS) form the signal peptide. Positions 22 to 32 (TPVRRSPDLEA) are excised as a propeptide. Residue F45 is modified to Phenylalanine amide. A propeptide spanning residues 47–93 (RSTLPVVPPAQPSFLQRYSAPQPAALTADDLMTFLRAYEEDYSSPVS) is cleaved from the precursor. Phenylalanine amide is present on residues F102 and F111. Positions 113 to 131 (RSVDEENSGYQAETNTYPQ) are excised as a propeptide. Position 143 is a leucine amide (L143). The propeptide occupies 145–177 (RDNELSESNDEDRYEVESERTKRSVVDPCNDCA). The segment at 145-177 (RDNELSESNDEDRYEVESERTKRSVVDPCNDCA) is disordered. Over residues 149 to 158 (LSESNDEDRY) the composition is skewed to acidic residues. The span at 159–169 (EVESERTKRSV) shows a compositional bias: basic and acidic residues.

This sequence belongs to the FARP (FMRFamide related peptide) family. As to expression, only expressed in the CNS and predominantly in the thoracic ganglia. Strongest expression is seen in two pairs of large neurons in each thoracic ganglion. These neurons are ventrolateral neurosecretory cells 1 and 2, they project their axons through transverse nerves into the periphery where axons from the prothoracic ganglion innervate the prothoracic gland.

It localises to the secreted. Its function is as follows. Regulates ecdysteroidogenesis by direct innervation of the prothoracic gland by reducing cAMP production via the receptor for myosuppressin. The neurons that innervate the prothoracic gland during the fifth instar are most active during days 0-4, after which they reduce and then peak again on day 6. Expression suppresses the biosynthesis of steroid hormones called ecdysteroids that elicit molting and metamorphosis. The chain is FMRFamide-related peptides from Bombyx mori (Silk moth).